The chain runs to 239 residues: Zwei Ig domain protein zig-7 (239 aa).

The N-terminal stretch at 1-21 (MKLINCISIALLCTLVDFSSA) is a signal peptide. An N-linked (GlcNAc...) asparagine glycan is attached at N43. Residues 145 to 211 (PHVIGAERRG…TEDHIGKYRC (67 aa)) form the Ig-like C2-type domain. C164 and C211 are disulfide-bonded.

In terms of tissue distribution, expressed in body wall muscles.

The protein resides in the secreted. Probably not involved in maintaining the position of ASI and ASH head neuron cell bodies and ventral nerve cord axons of PVQ, PVP, RMEV, AVK and HSN neurons. The polypeptide is Zwei Ig domain protein zig-7 (Caenorhabditis elegans).